Reading from the N-terminus, the 283-residue chain is Putative S-adenosyl-L-methionine-dependent methyltransferase SAV_474/SAV474 (283 aa).

Residues Asp121 and 150–151 (DL) contribute to the S-adenosyl-L-methionine site. Residues 258–283 (AAYGRPISTPPQREERPGGLISAVRR) are disordered.

The protein belongs to the UPF0677 family.

In terms of biological role, exhibits S-adenosyl-L-methionine-dependent methyltransferase activity. The polypeptide is Putative S-adenosyl-L-methionine-dependent methyltransferase SAV_474/SAV474 (Streptomyces avermitilis (strain ATCC 31267 / DSM 46492 / JCM 5070 / NBRC 14893 / NCIMB 12804 / NRRL 8165 / MA-4680)).